We begin with the raw amino-acid sequence, 334 residues long: NADH dehydrogenase (ubiquinone) complex I, assembly factor 6 homolog (334 aa).

The N-terminal 11 residues, Met1–Arg11, are a transit peptide targeting the mitochondrion.

This sequence belongs to the NDUFAF6 family. Associates with mitochondrial complex I assembly intermediates during its biogenesis. Forms a complex including sicily, ND-42 and Hsp83; the complex is necessary to chaperone ND-42 in the cytoplasm before mitochondrial import; the interaction between sicily and ND-42 is direct and occurs preferably between the unprocessed forms in the cytoplasm; the interaction with Hsp83 is direct. Interacts with ND-30; interaction is stronger between the unprocessed forms in the cytoplasm. Expressed in the ventral nerve cord, larval brain, motor neuron axons, imaginal disks, and muscles (at protein level).

The protein localises to the mitochondrion inner membrane. It localises to the cytoplasm. The protein resides in the cytosol. Involved in the assembly of mitochondrial NADH:ubiquinone oxidoreductase complex (Complex I) at early stages. Interacts with cytosolic Hsp90 to chaperone the Complex I subunit ND-42 in the cytoplasm. The sequence is that of NADH dehydrogenase (ubiquinone) complex I, assembly factor 6 homolog from Drosophila melanogaster (Fruit fly).